We begin with the raw amino-acid sequence, 122 residues long: Small ribosomal subunit protein uS13 (122 aa).

Positions Gly-94–Lys-122 are disordered. The span at Ala-106 to Lys-122 shows a compositional bias: basic residues.

The protein belongs to the universal ribosomal protein uS13 family. Part of the 30S ribosomal subunit. Forms a loose heterodimer with protein S19. Forms two bridges to the 50S subunit in the 70S ribosome.

Located at the top of the head of the 30S subunit, it contacts several helices of the 16S rRNA. In the 70S ribosome it contacts the 23S rRNA (bridge B1a) and protein L5 of the 50S subunit (bridge B1b), connecting the 2 subunits; these bridges are implicated in subunit movement. Contacts the tRNAs in the A and P-sites. The polypeptide is Small ribosomal subunit protein uS13 (Mycoplasma mobile (strain ATCC 43663 / 163K / NCTC 11711) (Mesomycoplasma mobile)).